Reading from the N-terminus, the 254-residue chain is Cell division protein ZapD (254 aa).

This sequence belongs to the ZapD family. As to quaternary structure, interacts with FtsZ.

It is found in the cytoplasm. Its function is as follows. Cell division factor that enhances FtsZ-ring assembly. Directly interacts with FtsZ and promotes bundling of FtsZ protofilaments, with a reduction in FtsZ GTPase activity. In Idiomarina loihiensis (strain ATCC BAA-735 / DSM 15497 / L2-TR), this protein is Cell division protein ZapD.